Consider the following 274-residue polypeptide: Bis(5'-nucleosyl)-tetraphosphatase, symmetrical (274 aa).

The protein belongs to the Ap4A hydrolase family.

The enzyme catalyses P(1),P(4)-bis(5'-adenosyl) tetraphosphate + H2O = 2 ADP + 2 H(+). Hydrolyzes diadenosine 5',5'''-P1,P4-tetraphosphate to yield ADP. The sequence is that of Bis(5'-nucleosyl)-tetraphosphatase, symmetrical from Shewanella baltica (strain OS195).